We begin with the raw amino-acid sequence, 115 residues long: MNPLIQEITKKQLRDDIPDFRPGDNVRVHAKIVEGERERIQLFEGVVIKRHGVGISATYTVRKISNGVGVERTFPLHSPRVEKIEVTRHGQVRRAKLYYLRALRGKAARIREKRR.

The protein belongs to the bacterial ribosomal protein bL19 family.

This protein is located at the 30S-50S ribosomal subunit interface and may play a role in the structure and function of the aminoacyl-tRNA binding site. This Lacticaseibacillus casei (strain BL23) (Lactobacillus casei) protein is Large ribosomal subunit protein bL19.